A 386-amino-acid chain; its full sequence is ADP,ATP carrier protein, mitochondrial (386 aa).

Residues 1–77 constitute a mitochondrion transit peptide; it reads MADMNQHPTV…SNASPVFVQA (77 aa). Solcar repeat units follow at residues 84–177, 189–281, and 289–375; these read AAFA…FKRL, KWFA…LKPV, and DSFF…LQVL. Transmembrane regions (helical) follow at residues 86-113, 154-178, 187-207, 257-278, and 292-312; these read FATD…VKLL, TANV…KRLF, YWKW…SSLF, FNIS…YDSL, and FASF…SYPI. The ADP site is built by Arg-159 and Lys-171. Arg-316 contributes to the ADP binding site. Positions 316-321 are important for transport activity; that stretch reads RRRMMM. The Nucleotide carrier signature motif motif lies at 316–321; the sequence is RRRMMM. Residues 352-372 form a helical membrane-spanning segment; sequence AGANILRAVAGAGVLAGYDKL.

This sequence belongs to the mitochondrial carrier (TC 2.A.29) family. As to quaternary structure, monomer.

It localises to the mitochondrion inner membrane. The enzyme catalyses ADP(in) + ATP(out) = ADP(out) + ATP(in). The matrix-open state (m-state) is inhibited by the membrane-permeable bongkrekic acid (BKA). The cytoplasmic-open state (c-state) is inhibited by the membrane-impermeable toxic inhibitor carboxyatractyloside (CATR). Its function is as follows. ADP:ATP antiporter that mediates import of ADP into the mitochondrial matrix for ATP synthesis, and export of ATP out to fuel the cell. Cycles between the cytoplasmic-open state (c-state) and the matrix-open state (m-state): operates by the alternating access mechanism with a single substrate-binding site intermittently exposed to either the cytosolic (c-state) or matrix (m-state) side of the inner mitochondrial membrane. The sequence is that of ADP,ATP carrier protein, mitochondrial (ANT) from Solanum tuberosum (Potato).